The chain runs to 312 residues: Methionyl-tRNA formyltransferase (312 aa).

113 to 116 is a (6S)-5,6,7,8-tetrahydrofolate binding site; sequence SLLP.

It belongs to the Fmt family.

It catalyses the reaction L-methionyl-tRNA(fMet) + (6R)-10-formyltetrahydrofolate = N-formyl-L-methionyl-tRNA(fMet) + (6S)-5,6,7,8-tetrahydrofolate + H(+). Attaches a formyl group to the free amino group of methionyl-tRNA(fMet). The formyl group appears to play a dual role in the initiator identity of N-formylmethionyl-tRNA by promoting its recognition by IF2 and preventing the misappropriation of this tRNA by the elongation apparatus. The sequence is that of Methionyl-tRNA formyltransferase from Francisella philomiragia subsp. philomiragia (strain ATCC 25017 / CCUG 19701 / FSC 153 / O#319-036).